Reading from the N-terminus, the 77-residue chain is DNA-directed RNA polymerase subunit omega (77 aa).

The protein belongs to the RNA polymerase subunit omega family. As to quaternary structure, in cyanobacteria the RNAP catalytic core is composed of 2 alpha, 1 beta, 1 beta', 1 gamma and 1 omega subunit. When a sigma factor is associated with the core the holoenzyme is formed, which can initiate transcription.

The enzyme catalyses RNA(n) + a ribonucleoside 5'-triphosphate = RNA(n+1) + diphosphate. In terms of biological role, promotes RNA polymerase assembly. Latches the N- and C-terminal regions of the beta' subunit thereby facilitating its interaction with the beta and alpha subunits. The polypeptide is DNA-directed RNA polymerase subunit omega (Thermosynechococcus vestitus (strain NIES-2133 / IAM M-273 / BP-1)).